The following is a 150-amino-acid chain: Macrodomain Ter protein (150 aa).

The protein belongs to the MatP family. As to quaternary structure, homodimer.

It is found in the cytoplasm. In terms of biological role, required for spatial organization of the terminus region of the chromosome (Ter macrodomain) during the cell cycle. Prevents early segregation of duplicated Ter macrodomains during cell division. Binds specifically to matS, which is a 13 bp signature motif repeated within the Ter macrodomain. This chain is Macrodomain Ter protein, found in Erwinia tasmaniensis (strain DSM 17950 / CFBP 7177 / CIP 109463 / NCPPB 4357 / Et1/99).